The primary structure comprises 793 residues: Potassium transporter 18 (793 aa).

Topologically, residues 1–53 (METRTNEYSRKGAMWELERNLDQPMDAEAGRLRNMYREKTYPTILLLRLAFQS) are cytoplasmic. Residues 54 to 74 (LGVVFGDLGTSPLYVFYNIFP) form a helical membrane-spanning segment. Over 75–86 (HGIEDTEQVIGA) the chain is Extracellular. The helical transmembrane segment at 87 to 107 (LSLIIYSLTLIPLVKYVFIVL) threads the bilayer. The Cytoplasmic segment spans residues 108–172 (RANDNGQGGT…WLEGHQFRKN (65 aa)). The helical transmembrane segment at 173 to 193 (LILILVLFGTCMAVGDGILTP) threads the bilayer. At 194–214 (AISVLSATGGIQVEEGRMRND) the chain is on the extracellular side. The chain crosses the membrane as a helical span at residues 215–235 (VVVIISVLILIGLFSMQHYGT). The Cytoplasmic segment spans residues 236–237 (DK). A helical membrane pass occupies residues 238–258 (VSWLFAPIVFVWFILIGILGA). Over 259–287 (VNICKYDHSVLKAFNPVYVYRYFKRGKTS) the chain is Extracellular. A helical membrane pass occupies residues 288 to 308 (WTSLGGIMLSITGTEALFADL). Position 309 (Ser-309) is a topological domain, cytoplasmic. The helical transmembrane segment at 310-330 (YFPVQAIQIAFTVVVFPCLLL) threads the bilayer. At 331–351 (QYTGQAAFIAANTNQVSHAFY) the chain is on the extracellular side. Residues 352–372 (ISLPAPILWPAFAVATAAAIV) traverse the membrane as a helical segment. The Cytoplasmic segment spans residues 373-409 (ASQATISATYSIIKQALALGCFPRVKIIHTSKKYLGQ). Residues 410 to 430 (IYSPDINWILMVFCIAVTAGF) traverse the membrane as a helical segment. Residues 431–442 (KNQSQIANAYGT) are Extracellular-facing. N-linked (GlcNAc...) asparagine glycosylation is present at Asn-432. The helical transmembrane segment at 443 to 463 (AVIMVMLVTTFLMIPIMLLVW) threads the bilayer. Over 464–468 (RSHWT) the chain is Cytoplasmic. Residues 469–489 (LVVAFTVLSLLVEIPYFSAVV) form a helical membrane-spanning segment. Residues 490–494 (RKIDQ) lie on the Extracellular side of the membrane. The chain crosses the membrane as a helical span at residues 495-515 (GGWVPLVFAAGFMIIMYVWHY). At 516 to 793 (GTLKRYEFEM…MLNVGQVFYV (278 aa)) the chain is on the cytoplasmic side.

It belongs to the HAK/KUP transporter (TC 2.A.72.3) family.

The protein resides in the membrane. In terms of biological role, high-affinity potassium transporter. The chain is Potassium transporter 18 (HAK18) from Oryza sativa subsp. japonica (Rice).